Consider the following 522-residue polypeptide: Neuropeptide FF receptor 2 (522 aa).

Topologically, residues 1-147 are extracellular; sequence MNSFFGTPAA…NYYLHQPQVA (147 aa). The segment at 25–49 is disordered; the sequence is KEAGRERRALSVQQRGGPAWSGSLE. Asn-110, Asn-122, and Asn-133 each carry an N-linked (GlcNAc...) asparagine glycan. Residues 148–168 traverse the membrane as a helical segment; it reads AIFIISYFLIFFLCMMGNTVV. At 169-184 the chain is on the cytoplasmic side; it reads CFIVMRNKHMHTVTNL. A helical transmembrane segment spans residues 185-205; it reads FILNLAISDLLVGIFCMPITL. The Extracellular portion of the chain corresponds to 206 to 221; it reads LDNIIAGWPFGNTMCK. Cys-220 and Cys-308 are oxidised to a cystine. The chain crosses the membrane as a helical span at residues 222–242; it reads ISGLVQGISVAASVFTLVAIA. The Cytoplasmic portion of the chain corresponds to 243–262; that stretch reads VDRFQCVVYPFKPKLTIKTA. Residues 263 to 283 traverse the membrane as a helical segment; that stretch reads FVIIMIIWVLAITIMSPSAVM. Residues 284 to 319 are Extracellular-facing; it reads LHVQEEKYYRVRLNSQNKTSPVYWCREDWPNQEMRK. An N-linked (GlcNAc...) asparagine glycan is attached at Asn-300. Residues 320 to 340 form a helical membrane-spanning segment; the sequence is IYTTVLFANIYLAPLSLIVIM. The Cytoplasmic portion of the chain corresponds to 341–377; sequence YGRIGISLFRAAVPHTGRKNQEQWHVVSRKKQKIIKM. A helical membrane pass occupies residues 378 to 398; it reads LLIVALLFILSWLPLWTLMML. The Extracellular portion of the chain corresponds to 399–413; it reads SDYADLSPNELQIIN. Residues 414–434 traverse the membrane as a helical segment; the sequence is IYIYPFAHWLAFGNSSVNPII. The Cytoplasmic segment spans residues 435–522; the sequence is YGFFNENFRR…LKETTNSSEI (88 aa).

This sequence belongs to the G-protein coupled receptor 1 family. Isoform 1 is abundant in placenta. Relatively highly expressed in thymus, testis, and small intestine. Expressed at low levels in several tissues including spleen, prostate, brain, heart, ovary, colon, kidney, lung, liver and pancreas and not expressed in skeletal muscle and leukocytes. Isoform 2 expression is highest in placenta (but at relatively low level compared to isoform 1). Very low level of expression in numerous tissues including adipose tissue and many brain regions. Isoform 3 is expressed in brain and heart and, at lower levels, in kidney, liver, lung and pancreas.

It is found in the cell membrane. Receptor for NPAF (A-18-F-amide) and NPFF (F-8-F-amide) neuropeptides, also known as morphine-modulating peptides. Can also be activated by a variety of naturally occurring or synthetic FMRF-amide like ligands. This receptor mediates its action by association with G proteins that activate a phosphatidylinositol-calcium second messenger system. This chain is Neuropeptide FF receptor 2, found in Homo sapiens (Human).